A 304-amino-acid polypeptide reads, in one-letter code: MYQDEIKHEIKTLLGERNGILLAHNYMRDEVQEIADITGDSLGLSIEAAKTDASVIVFCGVHFMAESASILAPDKTVLLPRLDAGCPMADMVTVPELQELKARHPGVPVVTYVNSSAAIKAISDICCTSANAVKVVKSLPESEIIFVPDRNLGRYVARFTDKTFHYWDGYCPTHERLKPDAVIRLKQEFPDALFICHPECNPEVEALADHVCSTTGMYDYCRKNPARRFIIGTEAGILYRLKKENPDKEFILASPALVCPNMKLTSLEDILESLRTMTPVVKVPEEIRIPAKQALDRMLAIPRD.

Iminosuccinate contacts are provided by His-24 and Ser-41. Cys-86 contributes to the [4Fe-4S] cluster binding site. Residues 112–114 and Ser-129 each bind iminosuccinate; that span reads YVN. Cys-171 provides a ligand contact to [4Fe-4S] cluster. Iminosuccinate contacts are provided by residues 197–199 and Thr-214; that span reads HPE. Cys-259 contributes to the [4Fe-4S] cluster binding site.

This sequence belongs to the quinolinate synthase family. Type 2 subfamily. [4Fe-4S] cluster serves as cofactor.

The protein localises to the cytoplasm. It catalyses the reaction iminosuccinate + dihydroxyacetone phosphate = quinolinate + phosphate + 2 H2O + H(+). Its pathway is cofactor biosynthesis; NAD(+) biosynthesis; quinolinate from iminoaspartate: step 1/1. Its function is as follows. Catalyzes the condensation of iminoaspartate with dihydroxyacetone phosphate to form quinolinate. The polypeptide is Quinolinate synthase (Geotalea uraniireducens (strain Rf4) (Geobacter uraniireducens)).